Reading from the N-terminus, the 371-residue chain is tRNA (guanine(26)-N(2))-dimethyltransferase (371 aa).

Residues 4–368 (IEVTEGRTTF…APLDAIAAAL (365 aa)) form the Trm1 methyltransferase domain. Residues Arg-41, Arg-66, Asp-82, Asp-108, and Ala-109 each coordinate S-adenosyl-L-methionine. Zn(2+)-binding residues include Cys-237, Cys-240, Cys-256, and Cys-259.

It belongs to the class I-like SAM-binding methyltransferase superfamily. Trm1 family.

It carries out the reaction guanosine(26) in tRNA + 2 S-adenosyl-L-methionine = N(2)-dimethylguanosine(26) in tRNA + 2 S-adenosyl-L-homocysteine + 2 H(+). In terms of biological role, dimethylates a single guanine residue at position 26 of a number of tRNAs using S-adenosyl-L-methionine as donor of the methyl groups. In Methanosphaerula palustris (strain ATCC BAA-1556 / DSM 19958 / E1-9c), this protein is tRNA (guanine(26)-N(2))-dimethyltransferase.